Consider the following 450-residue polypeptide: Keratin, type I cytoskeletal 25 (450 aa).

A disordered region spans residues 1–25; that stretch reads MSLRLPSGSRRASPRPTTGSLRLSS. A head region spans residues 1–78; that stretch reads MSLRLPSGSR…VNEGGLLSGN (78 aa). A coil 1A region spans residues 79 to 114; the sequence is EKVTMQNLNDRLASYLENVRALEEANADLEQKIKGW. Residues 79-394 enclose the IF rod domain; it reads EKVTMQNLND…LLIGGDDGAC (316 aa). Residues 115-136 are linker 1; it reads YEKFGPGSCRGLDHDYSRYFPI. The tract at residues 137 to 228 is coil 1B; sequence IEDLKNQIIA…KNHKEEMQVL (92 aa). The segment at 229–251 is linker 12; sequence QCAAGGNVNVEMNAAPGVDLTVL. The interval 252–390 is coil 2; the sequence is LNNMRAEYEA…ETYCLLIGGD (139 aa). Residues 391–450 form a tail region; the sequence is DGACKSGGYKSKDYGAGNVGNQMKDPVKAIVVKKVLEEVDQRSKILTPRLHSLEEKSQSN. Residue Ser-442 is modified to Phosphoserine.

The protein belongs to the intermediate filament family. As to quaternary structure, heterodimer of a type I and a type II keratin. Heterodimer with type II keratin KRT5 leading to the formation of keratin intermediate filament (KIF) network. Interacts with KRT6A to form filaments.

The protein resides in the cytoplasm. Functionally, essential for the proper assembly of type I and type II keratin protein complexes and formation of keratin intermediate filaments in the inner root sheath (irs). Plays a role in the cytoskeleton organization. The sequence is that of Keratin, type I cytoskeletal 25 from Bos taurus (Bovine).